A 241-amino-acid chain; its full sequence is Fatty acid metabolism regulator protein (241 aa).

The region spanning 11–79 (QSPAALAEEY…HGKPTKVNNI (69 aa)) is the HTH gntR-type domain. A DNA-binding region (H-T-H motif) is located at residues 39–58 (ERDLADKIGVTRTTLREVLQ).

As to quaternary structure, homodimer.

It localises to the cytoplasm. Functionally, multifunctional regulator of fatty acid metabolism. The protein is Fatty acid metabolism regulator protein of Haemophilus influenzae (strain PittEE).